Here is a 554-residue protein sequence, read N- to C-terminus: Protein translocase subunit SecD (554 aa).

A run of 6 helical transmembrane segments spans residues 10–30 (LVIL…MFYA), 392–412 (AGMV…IASY), 414–434 (LFGF…FAVM), 435–455 (GAIG…TIGT), 491–511 (AIID…VLGA), and 516–536 (GFAV…IWVV).

The protein belongs to the SecD/SecF family. SecD subfamily. In terms of assembly, forms a complex with SecF. Part of the essential Sec protein translocation apparatus which comprises SecA, SecYEG and auxiliary proteins SecDF-YajC and YidC.

It is found in the cell inner membrane. In terms of biological role, part of the Sec protein translocase complex. Interacts with the SecYEG preprotein conducting channel. SecDF uses the proton motive force (PMF) to complete protein translocation after the ATP-dependent function of SecA. The polypeptide is Protein translocase subunit SecD (Rhodobacter capsulatus (strain ATCC BAA-309 / NBRC 16581 / SB1003)).